Here is a 98-residue protein sequence, read N- to C-terminus: PqqA binding protein (98 aa).

This sequence belongs to the PqqD family. Monomer. Interacts with PqqE.

It functions in the pathway cofactor biosynthesis; pyrroloquinoline quinone biosynthesis. Functions as a PqqA binding protein and presents PqqA to PqqE, in the pyrroloquinoline quinone (PQQ) biosynthetic pathway. This chain is PqqA binding protein, found in Rhizobium meliloti (strain 1021) (Ensifer meliloti).